We begin with the raw amino-acid sequence, 171 residues long: Disulfide bond formation protein B (171 aa).

Topologically, residues 1–8 (MQWSYRFV) are cytoplasmic. Residues 9 to 25 (SGLLVLASIVGMTFALY) form a helical membrane-spanning segment. Residues 26–43 (LEHFKGLEPCPLCIFQRV) lie on the Periplasmic side of the membrane. An intrachain disulfide couples Cys35 to Cys38. Residues 44 to 60 (GLMAMGIVALIAFLHNP) traverse the membrane as a helical segment. At 61–67 (VSNAFKR) the chain is on the cytoplasmic side. Residues 68-85 (VYAFLATLGILWSVGVAI) traverse the membrane as a helical segment. The Periplasmic segment spans residues 86–142 (RHVWLQTLPPDQVPSCGPGLNYLLDALPLKTVLQQVLQGSGECAAIHWTFLGQSLPV). Cys101 and Cys128 are oxidised to a cystine. A helical transmembrane segment spans residues 143-161 (WSLAYFSLILLVCVWQLLR). Residues 162 to 171 (RYPVIVTKKK) are Cytoplasmic-facing.

This sequence belongs to the DsbB family.

The protein resides in the cell inner membrane. Its function is as follows. Required for disulfide bond formation in some periplasmic proteins. Acts by oxidizing the DsbA protein. The polypeptide is Disulfide bond formation protein B (Acinetobacter baylyi (strain ATCC 33305 / BD413 / ADP1)).